The primary structure comprises 439 residues: Ribosomal protein uS12 methylthiotransferase RimO (439 aa).

Positions 1–117 (MNIGFISLGC…IAGVVNRIAQ (117 aa)) constitute an MTTase N-terminal domain. [4Fe-4S] cluster-binding residues include cysteine 10, cysteine 46, cysteine 80, cysteine 154, cysteine 158, and cysteine 161. In terms of domain architecture, Radical SAM core spans 140 to 370 (TTPPGSAYLK…LRLQQKITRQ (231 aa)). One can recognise a TRAM domain in the interval 373 to 439 (LARINTQEKV…RNYDMIGEYQ (67 aa)).

The protein belongs to the methylthiotransferase family. RimO subfamily. It depends on [4Fe-4S] cluster as a cofactor.

It localises to the cytoplasm. The enzyme catalyses L-aspartate(89)-[ribosomal protein uS12]-hydrogen + (sulfur carrier)-SH + AH2 + 2 S-adenosyl-L-methionine = 3-methylsulfanyl-L-aspartate(89)-[ribosomal protein uS12]-hydrogen + (sulfur carrier)-H + 5'-deoxyadenosine + L-methionine + A + S-adenosyl-L-homocysteine + 2 H(+). Catalyzes the methylthiolation of an aspartic acid residue of ribosomal protein uS12. This chain is Ribosomal protein uS12 methylthiotransferase RimO, found in Syntrophomonas wolfei subsp. wolfei (strain DSM 2245B / Goettingen).